A 1447-amino-acid polypeptide reads, in one-letter code: ATP-dependent helicase SGS1 (1447 aa).

Disordered stretches follow at residues 37–78, 243–264, 342–430, 552–572, and 601–639; these read IANK…TATK, KKDG…QDDN, KEGA…EEKE, KENE…LSDS, and TERK…FDDD. A compositionally biased stretch (polar residues) spans 59 to 78; it reads GTTNFITSIPASGPTNTATK. Positions 243–253 are enriched in basic and acidic residues; the sequence is KKDGMSKDQSK. The span at 254–264 shows a compositional bias: polar residues; it reads GRSQVSSQDDN. A compositionally biased stretch (basic and acidic residues) spans 363–386; that stretch reads ELTRRRNMRSREPVNYRIPDRDDP. 2 stretches are compositionally biased toward acidic residues: residues 403–415 and 552–561; these read EREE…EAED and KENEDFEEDN. Residues 601-611 are compositionally biased toward basic and acidic residues; the sequence is TERKLTGDNEH. Residues 687 to 864 enclose the Helicase ATP-binding domain; sequence VNATLQGKDV…IHNLELKEPV (178 aa). Residue 714-721 participates in ATP binding; the sequence is AVVKSGKT. The short motif at 808–811 is the DEAH box element; it reads DEAH. In terms of domain architecture, Helicase C-terminal spans 886–1035; the sequence is TIFEICDAVK…NKEKHLNKLQ (150 aa). In terms of domain architecture, HRDC spans 1272–1351; the sequence is LNNLRMTYER…ADLSKKRSSE (80 aa). Residues 1402-1411 are compositionally biased toward polar residues; the sequence is QIRQSQLPKN. A disordered region spans residues 1402–1447; it reads QIRQSQLPKNTTSSKSGTRSISKSSKKSANGRRGFRNYRGHYRGRK. Residues 1412–1424 are compositionally biased toward low complexity; that stretch reads TTSSKSGTRSISK. Basic residues predominate over residues 1425 to 1447; it reads SSKKSANGRRGFRNYRGHYRGRK.

The protein belongs to the helicase family. RecQ subfamily. In terms of assembly, heterodimer with TOP3. Forms a complex with TOP3 and RMI1. Forms a ternary complex with a MLH1-MLH3 heterodimer (MutLbeta) during meiosis. Interacts with TOP2. It depends on Mg(2+) as a cofactor.

The protein localises to the nucleus. The protein resides in the nucleolus. The catalysed reaction is Couples ATP hydrolysis with the unwinding of duplex DNA by translocating in the 3'-5' direction.. It catalyses the reaction ATP + H2O = ADP + phosphate + H(+). Its activity is regulated as follows. Helicase activity on G-quadruplex DNA is inhibited by ATP-gamma-S. In terms of biological role, ATP-dependent 3'-5' DNA helicase able to unwind duplex DNA or DNA:RNA heteroduplex. Unwinds G-quadruplex DNA; unwinding occurs in the 3'-5' direction, requires a 3' single-stranded end of at least 7 nucleotides. Helicase activity is higher on G-quadruplex substrates than on duplex DNA substrates. Assayed with a catalytic fragment (residues 400-1268). Telomeres and rDNA are notably G-rich; formation of G-quadruplex DNA would block DNA replication and transcription. Acts as an integral component of the S-phase checkpoint response, which arrests cells due to DNA damage or blocked fork progression during DNA replication. Can create a deleterious topological substrate that TOP3 preferentially resolves. The TOP3-SGS1 protein complex may function as a eukaryotic reverse gyrase introducing positive supercoils into extrachromosomal ribosomal DNA rings. Together with topoisomerase II has a role in chromosomal segregation. Maintains rDNA structure where it has a role in re-starting stalled replication forks. This chain is ATP-dependent helicase SGS1, found in Saccharomyces cerevisiae (strain ATCC 204508 / S288c) (Baker's yeast).